Here is a 332-residue protein sequence, read N- to C-terminus: RING-H2 finger protein ATL81 (332 aa).

A signal peptide spans 1 to 19; the sequence is MYDLTFLLISLFPIDITLP. A helical transmembrane segment spans residues 76–96; the sequence is IVLTGSLLFIIFTGFFSFFFC. The RING-type; atypical zinc finger occupies 154–196; the sequence is CSICLTEFMDDDTIRLISTCNHSFHTICIDLWFEGHKTCPVCR.

This sequence belongs to the RING-type zinc finger family. ATL subfamily.

The protein resides in the membrane. The catalysed reaction is S-ubiquitinyl-[E2 ubiquitin-conjugating enzyme]-L-cysteine + [acceptor protein]-L-lysine = [E2 ubiquitin-conjugating enzyme]-L-cysteine + N(6)-ubiquitinyl-[acceptor protein]-L-lysine.. Its pathway is protein modification; protein ubiquitination. The polypeptide is RING-H2 finger protein ATL81 (ATL81) (Arabidopsis thaliana (Mouse-ear cress)).